Consider the following 277-residue polypeptide: F420-dependent methylenetetrahydromethanopterin dehydrogenase (277 aa).

The disordered stretch occupies residues 249-277 (EKATDSVSRKPHGADGKRLNKTKLMEKPE).

This sequence belongs to the MTD family.

It catalyses the reaction 5,10-methylenetetrahydromethanopterin + oxidized coenzyme F420-(gamma-L-Glu)(n) + 2 H(+) = 5,10-methenyl-5,6,7,8-tetrahydromethanopterin + reduced coenzyme F420-(gamma-L-Glu)(n). It participates in one-carbon metabolism; methanogenesis from CO(2); 5,10-methylene-5,6,7,8-tetrahydromethanopterin from 5,10-methenyl-5,6,7,8-tetrahydromethanopterin (coenzyme F420 route): step 1/1. Functionally, catalyzes the reversible reduction of methenyl-H(4)MPT(+) to methylene-H(4)MPT. This Methanococcus aeolicus (strain ATCC BAA-1280 / DSM 17508 / OCM 812 / Nankai-3) protein is F420-dependent methylenetetrahydromethanopterin dehydrogenase.